We begin with the raw amino-acid sequence, 140 residues long: Organic hydroperoxide resistance protein-like (140 aa).

The protein belongs to the OsmC/Ohr family.

The chain is Organic hydroperoxide resistance protein-like from Staphylococcus aureus (strain bovine RF122 / ET3-1).